The sequence spans 179 residues: Crossover junction endodeoxyribonuclease RuvC (179 aa).

Residues D7 and E67 contribute to the active site. Mn(2+) is bound by residues D7 and E67. The DNA-binding loop motif lies at 68 to 74 (DQILRRQ). Active-site residues include H139 and D142. Residue H139 participates in Mn(2+) binding.

The protein belongs to the RuvC family. As to quaternary structure, homodimer which binds Holliday junction (HJ) DNA. The HJ becomes 2-fold symmetrical on binding to RuvC with unstacked arms; it has a different conformation from HJ DNA in complex with RuvA. In the full resolvosome a probable DNA-RuvA(4)-RuvB(12)-RuvC(2) complex forms which resolves the HJ. Mn(2+) is required as a cofactor.

It localises to the cytoplasm. It catalyses the reaction Endonucleolytic cleavage at a junction such as a reciprocal single-stranded crossover between two homologous DNA duplexes (Holliday junction).. Functionally, the RuvA-RuvB-RuvC complex processes Holliday junction (HJ) DNA during genetic recombination and DNA repair. Endonuclease that resolves HJ intermediates. Cleaves cruciform DNA by making single-stranded nicks across the HJ at symmetrical positions within the homologous arms, probably yielding a 5'-phosphate and a 3'-hydroxyl group; requires a central core of homology in the junction. The consensus cleavage sequence is 5'-(G/C)TC(C/G)-3' (a different site than E.coli); cleavage occurs on the 3'-side of the TC dinucleotide at the point of strand exchange. Also resolves nicked HJ intermediates, replication forks and Y-junction DNA in vitro. HJ branch migration catalyzed by RuvA-RuvB allows RuvC to scan DNA until it finds its consensus sequence, where it cleaves and resolves the cruciform DNA. Binds HJ DNA independently of homologous core or consensus sequence; Mn(2+) is not essential for binding but improves it, while &gt;1.0 mM Mg(2+) inhibit binding. Also binds Y-junction DNA less well. Requires a homologous core to cleave DNA. Another study shows divalent cations (Mn(2+), Mg(2+) and Ca(2+), tested up to 5.0 mM) improve DNA binding considerably over binding in their absence. The sequence is that of Crossover junction endodeoxyribonuclease RuvC from Deinococcus radiodurans (strain ATCC 13939 / DSM 20539 / JCM 16871 / CCUG 27074 / LMG 4051 / NBRC 15346 / NCIMB 9279 / VKM B-1422 / R1).